Here is a 193-residue protein sequence, read N- to C-terminus: Hydroxyacylglutathione hydrolase-like protein (193 aa).

Residues His54, His56, Asp58, His59, and His110 each contribute to the Zn(2+) site.

The protein belongs to the metallo-beta-lactamase superfamily. Glyoxalase II family. Zn(2+) serves as cofactor.

Hydrolase acting on ester bonds. The chain is Hydroxyacylglutathione hydrolase-like protein (HAGHL) from Bos taurus (Bovine).